A 181-amino-acid polypeptide reads, in one-letter code: CASP-like protein 5A1 (181 aa).

The Cytoplasmic segment spans residues Met-1–Thr-38. A helical transmembrane segment spans residues Pro-39–Met-59. At Ser-60–Thr-77 the chain is on the extracellular side. A helical transmembrane segment spans residues Thr-78–Val-98. The Cytoplasmic portion of the chain corresponds to Lys-99–Asp-115. Residues Gly-116–Ile-136 form a helical membrane-spanning segment. The Extracellular portion of the chain corresponds to Asp-137–Thr-153. A helical transmembrane segment spans residues Ala-154–Tyr-174. Residues Ser-175–Gly-181 lie on the Cytoplasmic side of the membrane.

Belongs to the Casparian strip membrane proteins (CASP) family. Homodimer and heterodimers.

The protein localises to the cell membrane. The protein is CASP-like protein 5A1 of Zea mays (Maize).